Reading from the N-terminus, the 123-residue chain is Aspartate 1-decarboxylase (123 aa).

Ser25 acts as the Schiff-base intermediate with substrate; via pyruvic acid in catalysis. At Ser25 the chain carries Pyruvic acid (Ser). Thr57 serves as a coordination point for substrate. Catalysis depends on Tyr58, which acts as the Proton donor. Position 73–75 (73–75 (GAA)) interacts with substrate.

The protein belongs to the PanD family. In terms of assembly, heterooctamer of four alpha and four beta subunits. It depends on pyruvate as a cofactor. In terms of processing, is synthesized initially as an inactive proenzyme, which is activated by self-cleavage at a specific serine bond to produce a beta-subunit with a hydroxyl group at its C-terminus and an alpha-subunit with a pyruvoyl group at its N-terminus.

It is found in the cytoplasm. It catalyses the reaction L-aspartate + H(+) = beta-alanine + CO2. Its pathway is cofactor biosynthesis; (R)-pantothenate biosynthesis; beta-alanine from L-aspartate: step 1/1. Catalyzes the pyruvoyl-dependent decarboxylation of aspartate to produce beta-alanine. In Clostridium novyi (strain NT), this protein is Aspartate 1-decarboxylase.